A 285-amino-acid polypeptide reads, in one-letter code: ATP synthase gamma chain (285 aa).

It belongs to the ATPase gamma chain family. F-type ATPases have 2 components, CF(1) - the catalytic core - and CF(0) - the membrane proton channel. CF(1) has five subunits: alpha(3), beta(3), gamma(1), delta(1), epsilon(1). CF(0) has three main subunits: a, b and c.

Its subcellular location is the cell membrane. In terms of biological role, produces ATP from ADP in the presence of a proton gradient across the membrane. The gamma chain is believed to be important in regulating ATPase activity and the flow of protons through the CF(0) complex. The sequence is that of ATP synthase gamma chain from Halalkalibacterium halodurans (strain ATCC BAA-125 / DSM 18197 / FERM 7344 / JCM 9153 / C-125) (Bacillus halodurans).